Here is a 1372-residue protein sequence, read N- to C-terminus: MAKPSVELTRELQDSIRRCLSQGAVLQQHHVKLETKPKKFEDRVLALTSWRLHLFLLKVPAKVESSFNVLEIRAFNTLSQNQILVETERGMVSMRLPSAESVDQVTRHVSSALSKVCPGPGCLIRRGNADTPEGPRDTSPNSETSTSTTHSVCGGFSETYAALCDYNGLHCREEVQWDVDTIYHAEDNREFNLLDFSHLESRDLALMVAALAYNQWFTKLYCKDLRLGSEVLEQVLHTLSKSGSLEELVLDNAGLKTDFVQKLAGVFGENGSCVLHALTLSHNPIEDKGFLSLSQQLLCFPSGLTKLCLAKTAISPRGLQALGQTFGANPAFASSLRYLDLSKNPGLLATDEANALYSFLAQPNALVHLDLSGTDCVIDLLLGALLHGCCSHLTYLNLARNSCSHRKGREAPPAFKQFFSSAYTLSHVNLSATKLPLEALRALLQGLSLNSHLSDLHLDLSSCELRSAGAQALQEQLGAVTCVGSLDLSDNGFDSDLLTLVPALGKNKSLKHLFLGKNFNVKAKTLEEILHKLVQLIQEEDCSLQSLSVADSRLKLRTSILINALGSNTCLAKVDLSGNGMEDIGAKMLSKALQINSSLRTILWDRNNTSALGFLDIARALESNHTLRFMSFPVSDISQAYRSAPERTEDVWQKIQWCLVRNNHSQTCPQEQAFRLQQGLVTSSAEQMLQRLCGRVQEEVRALRLCPLEPVQDELLYARDLIKDAKNSRALFPSLYELGHVLANDGPVRQRLESVASEVSKAVDKELQVILESMVSLTQELCPVAMRVAEGHNKMLSNVAERVTVPRNFIRGALLEQAGQDIQNKLDEVKLSVVTYLTSSIVDEILQELYHSHKSLARHLTQLRTLSDPPGCPGQGQDLSSRGRGRNHDHEETTDDELGTNIDTMAIKKQKRCRKIRPVSAFISGSPQDMESQLGNLGIPPGWFSGLGGSQPTASGSWEGLSELPTHGYKLRHQTQGRPRPPRTTPPGPGRPSMPAPGTRQENGMATRLDEGLEDFFSRRVLEESSSYPRTLRTVRPGLSEAPLPPLQKKRRRGLFHFRRPRSFKGDRGPGSPTTGLLLPPPPPPPPTQESPPSPDPPSLGNNSSPCWSPEEESSLLPGFGGGRGPSFRRKMGTEGSEPGEGGPAPGTAQQPRVHGVALPGLERAKGWSFDGKREGPGPDQEGSTQAWQKRRSSDDAGPGSWKPPPPPQSTKPSFSAMRRAEATWHIAEESAPNHSCQSPSPASQDGEEEKEGTLFPERTLPARNAKLQDPALAPWPPKPVAVPRGRQPPQEPGVREEAEAGDAAPGVNKPRLRLSSQQDQEEPEVQGPPDPGRRTAPLKPKRTRRAQSCDKLEPDRRRPPDPTGTSEPGTD.

The interval 126-151 (RGNADTPEGPRDTSPNSETSTSTTHS) is disordered. Positions 138-151 (TSPNSETSTSTTHS) are enriched in low complexity. LRR repeat units lie at residues 244 to 264 (SLEE…QKLA), 274 to 295 (VLHA…SLSQ), 303 to 323 (GLTK…QALG), 335 to 357 (SLRY…NALY), 365 to 385 (ALVH…LGAL), 392 to 413 (HLTY…EAPP), 424 to 444 (TLSH…RALL), 455 to 475 (DLHL…ALQE), 482 to 501 (CVGS…LTLV), and 509 to 530 (SLKH…EEIL). Disordered stretches follow at residues 865–900 (TLSD…ELGT), 970–1003 (KLRH…RQEN), and 1024–1372 (ESSS…PGTD). The segment covering 982–995 (PRTTPPGPGRPSMP) has biased composition (pro residues). The segment at 1040 to 1073 (SEAPLPPLQKKRRRGLFHFRRPRSFKGDRGPGSP) is necessary for localization at the cell membrane. Over residues 1048 to 1063 (QKKRRRGLFHFRRPRS) the composition is skewed to basic residues. Residues 1079–1098 (LPPPPPPPPTQESPPSPDPP) are compositionally biased toward pro residues. The span at 1099-1109 (SLGNNSSPCWS) shows a compositional bias: low complexity. 2 stretches are compositionally biased toward basic and acidic residues: residues 1163 to 1177 (ERAK…REGP) and 1219 to 1229 (RRAEATWHIAE). Polar residues predominate over residues 1233–1244 (PNHSCQSPSPAS). Residues 1348–1361 (QSCDKLEPDRRRPP) are compositionally biased toward basic and acidic residues.

This sequence belongs to the CARMIL family. In terms of tissue distribution, widely expressed, with much higher levels in fetal tissues than in adult ones. Up-regulated in certain cancer tissues.

Its subcellular location is the cytoplasm. The protein resides in the cell membrane. The polypeptide is Capping protein, Arp2/3 and myosin-I linker protein 3 (Homo sapiens (Human)).